The following is a 158-amino-acid chain: Crossover junction endodeoxyribonuclease RuvC (158 aa).

Catalysis depends on residues aspartate 7, glutamate 67, and aspartate 140. Mg(2+) contacts are provided by aspartate 7, glutamate 67, and aspartate 140.

This sequence belongs to the RuvC family. As to quaternary structure, homodimer which binds Holliday junction (HJ) DNA. The HJ becomes 2-fold symmetrical on binding to RuvC with unstacked arms; it has a different conformation from HJ DNA in complex with RuvA. In the full resolvosome a probable DNA-RuvA(4)-RuvB(12)-RuvC(2) complex forms which resolves the HJ. Mg(2+) serves as cofactor.

The protein localises to the cytoplasm. The catalysed reaction is Endonucleolytic cleavage at a junction such as a reciprocal single-stranded crossover between two homologous DNA duplexes (Holliday junction).. The RuvA-RuvB-RuvC complex processes Holliday junction (HJ) DNA during genetic recombination and DNA repair. Endonuclease that resolves HJ intermediates. Cleaves cruciform DNA by making single-stranded nicks across the HJ at symmetrical positions within the homologous arms, yielding a 5'-phosphate and a 3'-hydroxyl group; requires a central core of homology in the junction. The consensus cleavage sequence is 5'-(A/T)TT(C/G)-3'. Cleavage occurs on the 3'-side of the TT dinucleotide at the point of strand exchange. HJ branch migration catalyzed by RuvA-RuvB allows RuvC to scan DNA until it finds its consensus sequence, where it cleaves and resolves the cruciform DNA. The chain is Crossover junction endodeoxyribonuclease RuvC from Dictyoglomus turgidum (strain DSM 6724 / Z-1310).